The primary structure comprises 325 residues: Tetraacyldisaccharide 4'-kinase (325 aa).

55–62 (TAGGNGKT) is a binding site for ATP.

Belongs to the LpxK family.

It catalyses the reaction a lipid A disaccharide + ATP = a lipid IVA + ADP + H(+). It participates in glycolipid biosynthesis; lipid IV(A) biosynthesis; lipid IV(A) from (3R)-3-hydroxytetradecanoyl-[acyl-carrier-protein] and UDP-N-acetyl-alpha-D-glucosamine: step 6/6. Transfers the gamma-phosphate of ATP to the 4'-position of a tetraacyldisaccharide 1-phosphate intermediate (termed DS-1-P) to form tetraacyldisaccharide 1,4'-bis-phosphate (lipid IVA). The polypeptide is Tetraacyldisaccharide 4'-kinase (Salmonella paratyphi B (strain ATCC BAA-1250 / SPB7)).